A 206-amino-acid chain; its full sequence is MARGKFITFEGIDGAGKTTHLQWFCDRLQERLGPTGRHVVVTREPGGTQLGETLREILLNQPMDLETEALLMFAGRREHLALVIEPALARGDWVVSDRFTDATFAYQGGGRGLPRDKLEALERWVQGGFQPDLTVLFDVQPQVASARRGAVRMPDKFESESDAFFARTRAEYLRRAHEAPHRFAIVDSSESIPQIRRQLEGVLAAL.

Position 11–18 (11–18) interacts with ATP; it reads GIDGAGKT.

This sequence belongs to the thymidylate kinase family.

The catalysed reaction is dTMP + ATP = dTDP + ADP. Phosphorylation of dTMP to form dTDP in both de novo and salvage pathways of dTTP synthesis. This is Thymidylate kinase from Burkholderia pseudomallei (strain 1106a).